A 205-amino-acid polypeptide reads, in one-letter code: MDFSISTIALFTLLVSYLLGSLPSGYLAGKWILGIDLREIGSGSTGATNVLRHVGKTPALFVFFIDVTKGIGAILIAKSFLLDESLQIAAGLASLSGHIWPVWLKGKGGKAVATGLGVFLGISWQVGLGSLGIFLLILSIWRIVSLASISAAISLPVLMLINSKETFSIPYIVISFIAMILVLWRHRSNLIRLIKGQEPRIGKSN.

6 helical membrane-spanning segments follow: residues 8-28, 57-77, 84-104, 118-138, 143-163, and 164-184; these read IALF…GYLA, TPAL…ILIA, ESLQ…PVWL, VFLG…LLIL, IVSL…LINS, and KETF…LVLW.

This sequence belongs to the PlsY family. As to quaternary structure, probably interacts with PlsX.

Its subcellular location is the cell inner membrane. The catalysed reaction is an acyl phosphate + sn-glycerol 3-phosphate = a 1-acyl-sn-glycero-3-phosphate + phosphate. It participates in lipid metabolism; phospholipid metabolism. Its function is as follows. Catalyzes the transfer of an acyl group from acyl-phosphate (acyl-PO(4)) to glycerol-3-phosphate (G3P) to form lysophosphatidic acid (LPA). This enzyme utilizes acyl-phosphate as fatty acyl donor, but not acyl-CoA or acyl-ACP. This is Glycerol-3-phosphate acyltransferase from Prochlorococcus marinus (strain SARG / CCMP1375 / SS120).